The chain runs to 225 residues: PKHD-type hydroxylase YbiX (225 aa).

Positions 78–177 constitute a Fe2OG dioxygenase domain; it reads TLSTPLFNRY…RVASFMWIQS (100 aa). Positions 96, 98, and 158 each coordinate Fe cation. Position 168 (arginine 168) interacts with 2-oxoglutarate.

Fe(2+) serves as cofactor. The cofactor is L-ascorbate.

This is PKHD-type hydroxylase YbiX from Shigella dysenteriae serotype 1 (strain Sd197).